The primary structure comprises 75 residues: ORF2p protein (75 aa).

Residues 13-18 (WIGHPV) are important for viral replication in intestinal cells. A transmembrane helix spans residues 23-45 (IVYLFVGFTPLTLETLHTLNYII). The tract at residues 53-75 (APRSPHSDPARMRIPTQPRKAPL) is disordered.

Its subcellular location is the host cytoplasmic vesicle membrane. In terms of biological role, facilitates virus release from intestinal cells in vitro, possibly through the host autophagic pathway. The sequence is that of ORF2p protein from Human enterovirus 71 (strain USA/BrCr/1970) (EV71).